We begin with the raw amino-acid sequence, 83 residues long: Small ribosomal subunit protein uS17 (83 aa).

This sequence belongs to the universal ribosomal protein uS17 family. As to quaternary structure, part of the 30S ribosomal subunit.

In terms of biological role, one of the primary rRNA binding proteins, it binds specifically to the 5'-end of 16S ribosomal RNA. This Francisella philomiragia subsp. philomiragia (strain ATCC 25017 / CCUG 19701 / FSC 153 / O#319-036) protein is Small ribosomal subunit protein uS17.